The primary structure comprises 172 residues: Small ribosomal subunit protein uS5 (172 aa).

Positions 16–79 (LKEKLVHINR…EDGKKNVIKV (64 aa)) constitute an S5 DRBM domain.

It belongs to the universal ribosomal protein uS5 family. As to quaternary structure, part of the 30S ribosomal subunit. Contacts proteins S4 and S8.

Functionally, with S4 and S12 plays an important role in translational accuracy. In terms of biological role, located at the back of the 30S subunit body where it stabilizes the conformation of the head with respect to the body. The polypeptide is Small ribosomal subunit protein uS5 (Chlorobium phaeobacteroides (strain DSM 266 / SMG 266 / 2430)).